The following is a 353-amino-acid chain: AA9 family lytic polysaccharide monooxygenase A (353 aa).

A signal peptide spans 1-19 (MKSTFGLLALAAAAKMAHA). Residues H20 and H102 each coordinate Cu(2+). C62 and C183 are joined by a disulfide. Residue H169 participates in O2 binding. Y180 contacts Cu(2+). The segment covering 266–276 (KPTTTTAAAPA) has biased composition (low complexity). Residues 266-316 (KPTTTTAAAPAETDSCDGDDDDYETETPAPQASATQAPAPQRPAPQTPSGS) are disordered. Acidic residues predominate over residues 279-290 (DSCDGDDDDYET). Low complexity predominate over residues 291–304 (ETPAPQASATQAPA). Residues 315 to 351 (GSVKEWYQCGGINYTGAKNCESGLVCKEWNPYYHQCI) form the CBM1 domain. Residue N327 is glycosylated (N-linked (GlcNAc...) asparagine).

The protein belongs to the polysaccharide monooxygenase AA9 family. Cu(2+) is required as a cofactor.

The protein resides in the secreted. The catalysed reaction is [(1-&gt;4)-beta-D-glucosyl]n+m + reduced acceptor + O2 = 4-dehydro-beta-D-glucosyl-[(1-&gt;4)-beta-D-glucosyl]n-1 + [(1-&gt;4)-beta-D-glucosyl]m + acceptor + H2O.. Its function is as follows. Lytic polysaccharide monooxygenase (LPMO) that depolymerizes crystalline and amorphous polysaccharides via the oxidation of scissile alpha- or beta-(1-4)-glycosidic bonds, yielding C4 oxidation products. Catalysis by LPMOs requires the reduction of the active-site copper from Cu(II) to Cu(I) by a reducing agent and H(2)O(2) or O(2) as a cosubstrate. The polypeptide is AA9 family lytic polysaccharide monooxygenase A (eglD) (Aspergillus clavatus (strain ATCC 1007 / CBS 513.65 / DSM 816 / NCTC 3887 / NRRL 1 / QM 1276 / 107)).